A 199-amino-acid chain; its full sequence is MITYTKPLSKLIGHFEKFPGIGPRTAQRLALFILKQPESTIRDFSKALLEAHNNVGRCKKCFNLTSEDECEICRNTERNQKLICVVSETKDLLALERAREFKGVYHVIGGLISPMDSVGPELLEIRSLVERVSKSEIDEIILALTPSVEGDTTSLYIGKLLSPFTKVTRIAYGLPMGSELEYVDEVTLARALEGRTKLN.

The C4-type zinc finger occupies 58–73; sequence CKKCFNLTSEDECEIC. A Toprim domain is found at 81 to 175; it reads KLICVVSETK…KVTRIAYGLP (95 aa).

This sequence belongs to the RecR family.

Its function is as follows. May play a role in DNA repair. It seems to be involved in an RecBC-independent recombinational process of DNA repair. It may act with RecF and RecO. In Prochlorococcus marinus (strain AS9601), this protein is Recombination protein RecR.